The following is a 336-amino-acid chain: CD226 antigen (336 aa).

An N-terminal signal peptide occupies residues 1 to 18 (MDYPTLLLALLHVYRALC). 2 consecutive Ig-like C2-type domains span residues 19-126 (EEVL…QVVQ) and 135-239 (PPNS…MRLT). Residues 19 to 254 (EEVLWHTSVP…TDNQYTRFVT (236 aa)) lie on the Extracellular side of the membrane. Residues N32, N83, N90, N97, N147, N186, N198, and N231 are each glycosylated (N-linked (GlcNAc...) asparagine). A disulfide bond links C37 and C108. 2 disulfide bridges follow: C152/C222 and C179/C199. A helical transmembrane segment spans residues 255–275 (GGTVLLLLFVISITTIIVIFL). At 276–336 (NRRRRRERSD…TFSRRPKTRV (61 aa)) the chain is on the cytoplasmic side. A disordered region spans residues 298 to 319 (KNYRSPISASQPTNQSMDDTRE). Over residues 302–314 (SPISASQPTNQSM) the composition is skewed to polar residues. Y322 bears the Phosphotyrosine mark.

As to quaternary structure, interacts with PVR and NECTIN2. Competes with PVRIG for NECTIN2-binding. Interacts with ITGAL; this interaction mediates CD226 localization to lipid rafts. Post-translationally, phosphorylated.

Its subcellular location is the cell membrane. Its function is as follows. Cell surface receptor that plays an important role in the immune system, particularly in intercellular adhesion, lymphocyte signaling, cytotoxicity and lymphokine secretion mediated by cytotoxic T-cells and NK cells. Functions as a costimulatory receptor upon recognition of target cells, such as virus-infected or tumor cells. Upon binding to its ligands PVR/CD155 or NECTIN2/CD112 on target cells, promotes the cytotoxic activity of NK cells and CTLs, enhancing their ability to kill these cells. Mechanistically, phosphorylation by Src kinases such as LYN of FYN, enables binding to adapter GRB2, leading to activation of VAV1, PI3K and PLCG1. Promotes also activation of kinases ERK and AKT, as well as calcium fluxes. This is CD226 antigen (CD226) from Macaca mulatta (Rhesus macaque).